Reading from the N-terminus, the 383-residue chain is Deoxyhypusine synthase-like protein (383 aa).

It belongs to the deoxyhypusine synthase family.

The polypeptide is Deoxyhypusine synthase-like protein (Nostoc sp. (strain PCC 7120 / SAG 25.82 / UTEX 2576)).